The chain runs to 193 residues: MKIYKADFITSGVNPEHYPEPLLPEVALAGRSNVGKSSFINKLVQRKALARTSSKPGKTQTLNFFNINDEVMFVDVPGYGYAKVSKTEREAWGKMMEKYFTTREILKGVVLLVDIRHEPSADDVIMYDFLKYYDLSVIVVATKLDKIKRGQRDKQIAAIKRKLQFDGQDTFIPFSSETGEGVDAAWEAIYRHL.

Residues 22–193 form the EngB-type G domain; sequence LLPEVALAGR…AAWEAIYRHL (172 aa). Residues 30-37, 57-61, 75-78, 142-145, and 174-176 each bind GTP; these read GRSNVGKS, GKTQT, DVPG, TKLD, and FSS. Residues serine 37 and threonine 59 each contribute to the Mg(2+) site.

This sequence belongs to the TRAFAC class TrmE-Era-EngA-EngB-Septin-like GTPase superfamily. EngB GTPase family. The cofactor is Mg(2+).

Functionally, necessary for normal cell division and for the maintenance of normal septation. The sequence is that of Probable GTP-binding protein EngB from Exiguobacterium sibiricum (strain DSM 17290 / CCUG 55495 / CIP 109462 / JCM 13490 / 255-15).